Reading from the N-terminus, the 426-residue chain is Glutamate-1-semialdehyde 2,1-aminomutase (426 aa).

Residue Lys-265 is modified to N6-(pyridoxal phosphate)lysine.

It belongs to the class-III pyridoxal-phosphate-dependent aminotransferase family. HemL subfamily. Homodimer. Pyridoxal 5'-phosphate is required as a cofactor.

The protein resides in the cytoplasm. The enzyme catalyses (S)-4-amino-5-oxopentanoate = 5-aminolevulinate. The protein operates within porphyrin-containing compound metabolism; protoporphyrin-IX biosynthesis; 5-aminolevulinate from L-glutamyl-tRNA(Glu): step 2/2. The chain is Glutamate-1-semialdehyde 2,1-aminomutase from Alcanivorax borkumensis (strain ATCC 700651 / DSM 11573 / NCIMB 13689 / SK2).